Reading from the N-terminus, the 276-residue chain is 2,3,4,5-tetrahydropyridine-2,6-dicarboxylate N-succinyltransferase (276 aa).

Substrate-binding residues include R108 and D145.

This sequence belongs to the transferase hexapeptide repeat family. Homotrimer.

It is found in the cytoplasm. The catalysed reaction is (S)-2,3,4,5-tetrahydrodipicolinate + succinyl-CoA + H2O = (S)-2-succinylamino-6-oxoheptanedioate + CoA. It functions in the pathway amino-acid biosynthesis; L-lysine biosynthesis via DAP pathway; LL-2,6-diaminopimelate from (S)-tetrahydrodipicolinate (succinylase route): step 1/3. This is 2,3,4,5-tetrahydropyridine-2,6-dicarboxylate N-succinyltransferase from Caulobacter vibrioides (strain ATCC 19089 / CIP 103742 / CB 15) (Caulobacter crescentus).